The sequence spans 322 residues: Lipoyl synthase (322 aa).

A disordered region spans residues 1-24; the sequence is MVTVLDTVSKPRPRHPEKAHRPDQ. Basic and acidic residues predominate over residues 14–24; it reads RHPEKAHRPDQ. [4Fe-4S] cluster contacts are provided by C59, C64, C70, C85, C89, C92, and S298. Residues 71 to 287 form the Radical SAM core domain; the sequence is WDKKHATFMI…ETIAYTKGFL (217 aa).

This sequence belongs to the radical SAM superfamily. Lipoyl synthase family. [4Fe-4S] cluster is required as a cofactor.

The protein localises to the cytoplasm. The enzyme catalyses [[Fe-S] cluster scaffold protein carrying a second [4Fe-4S](2+) cluster] + N(6)-octanoyl-L-lysyl-[protein] + 2 oxidized [2Fe-2S]-[ferredoxin] + 2 S-adenosyl-L-methionine + 4 H(+) = [[Fe-S] cluster scaffold protein] + N(6)-[(R)-dihydrolipoyl]-L-lysyl-[protein] + 4 Fe(3+) + 2 hydrogen sulfide + 2 5'-deoxyadenosine + 2 L-methionine + 2 reduced [2Fe-2S]-[ferredoxin]. It functions in the pathway protein modification; protein lipoylation via endogenous pathway; protein N(6)-(lipoyl)lysine from octanoyl-[acyl-carrier-protein]: step 2/2. Its function is as follows. Catalyzes the radical-mediated insertion of two sulfur atoms into the C-6 and C-8 positions of the octanoyl moiety bound to the lipoyl domains of lipoate-dependent enzymes, thereby converting the octanoylated domains into lipoylated derivatives. This Chelativorans sp. (strain BNC1) protein is Lipoyl synthase.